Consider the following 388-residue polypeptide: Succinyl-diaminopimelate desuccinylase (388 aa).

His-72 serves as a coordination point for Zn(2+). Residue Asp-74 is part of the active site. A Zn(2+)-binding site is contributed by Asp-105. The active-site Proton acceptor is the Glu-139. Residues Glu-140, Glu-168, and His-353 each coordinate Zn(2+).

The protein belongs to the peptidase M20A family. DapE subfamily. Homodimer. Zn(2+) serves as cofactor. Requires Co(2+) as cofactor.

It catalyses the reaction N-succinyl-(2S,6S)-2,6-diaminopimelate + H2O = (2S,6S)-2,6-diaminopimelate + succinate. It participates in amino-acid biosynthesis; L-lysine biosynthesis via DAP pathway; LL-2,6-diaminopimelate from (S)-tetrahydrodipicolinate (succinylase route): step 3/3. Functionally, catalyzes the hydrolysis of N-succinyl-L,L-diaminopimelic acid (SDAP), forming succinate and LL-2,6-diaminopimelate (DAP), an intermediate involved in the bacterial biosynthesis of lysine and meso-diaminopimelic acid, an essential component of bacterial cell walls. In Orientia tsutsugamushi (strain Boryong) (Rickettsia tsutsugamushi), this protein is Succinyl-diaminopimelate desuccinylase.